We begin with the raw amino-acid sequence, 106 residues long: ATP-dependent Clp protease adapter protein ClpS (106 aa).

This sequence belongs to the ClpS family. In terms of assembly, binds to the N-terminal domain of the chaperone ClpA.

Functionally, involved in the modulation of the specificity of the ClpAP-mediated ATP-dependent protein degradation. The sequence is that of ATP-dependent Clp protease adapter protein ClpS from Enterobacter sp. (strain 638).